The primary structure comprises 29 residues: Thrombin-like enzyme collinein-2 (29 aa).

As to quaternary structure, monomer. Expressed by the venom gland.

It is found in the secreted. Its function is as follows. Thrombin-like snake venom serine protease. The protein is Thrombin-like enzyme collinein-2 of Crotalus durissus collilineatus (Brazilian rattlesnake).